We begin with the raw amino-acid sequence, 276 residues long: Bis(5'-nucleosyl)-tetraphosphatase, symmetrical (276 aa).

Belongs to the Ap4A hydrolase family.

The enzyme catalyses P(1),P(4)-bis(5'-adenosyl) tetraphosphate + H2O = 2 ADP + 2 H(+). Functionally, hydrolyzes diadenosine 5',5'''-P1,P4-tetraphosphate to yield ADP. The protein is Bis(5'-nucleosyl)-tetraphosphatase, symmetrical of Legionella pneumophila (strain Corby).